Reading from the N-terminus, the 347-residue chain is MKLKNIVNYLKEVGIDVELKGDDSINVDQVSGLVEAQQNHISFLSDSKRIHELETTSAGVVLIHPKFESLTTTTCLLVENPYFAFAKVSQLLNPENFPAGIHASAVVDDSAKIAESAWIGENVVIGKRVTIGDNCYIGPGSVVLDDSVIGQKTRLVANVTVMHNCIIGEEGYLDPGCVIGGQGFGFANEQGEWHKIPQIGRVVIGDRVFVGVNANIHRGAINDTVIESNCIIDSLVHIAHNVSIGYGSAIASQVGFAGSTAVGKYCVFAGQAGINGHISIADKSYFAAKSGVTHTIKESGSYSGFPAIPTPEWQKNMVRSKGLNKMAQKIKHLEKELQELKSKLEND.

Catalysis depends on His-240, which acts as the Proton acceptor.

It belongs to the transferase hexapeptide repeat family. LpxD subfamily. As to quaternary structure, homotrimer.

It carries out the reaction a UDP-3-O-[(3R)-3-hydroxyacyl]-alpha-D-glucosamine + a (3R)-hydroxyacyl-[ACP] = a UDP-2-N,3-O-bis[(3R)-3-hydroxyacyl]-alpha-D-glucosamine + holo-[ACP] + H(+). It functions in the pathway bacterial outer membrane biogenesis; LPS lipid A biosynthesis. Functionally, catalyzes the N-acylation of UDP-3-O-acylglucosamine using 3-hydroxyacyl-ACP as the acyl donor. Is involved in the biosynthesis of lipid A, a phosphorylated glycolipid that anchors the lipopolysaccharide to the outer membrane of the cell. This is UDP-3-O-acylglucosamine N-acyltransferase from Hydrogenovibrio crunogenus (strain DSM 25203 / XCL-2) (Thiomicrospira crunogena).